Here is a 490-residue protein sequence, read N- to C-terminus: Hippocampus abundant transcript 1 protein (490 aa).

N-acetylmethionine is present on Met1. At 1–40 (MTQGKKKKRAANRSIMLAKKIIIKDGGTPQGIGSPSVYHA) the chain is on the extracellular side. A glycan (N-linked (GlcNAc...) asparagine) is linked at Asn12. Residues 41–61 (VIVIFLEFFAWGLLTAPTLVV) traverse the membrane as a helical segment. Residues 62–74 (LHETFPKHTFLMN) lie on the Cytoplasmic side of the membrane. The chain crosses the membrane as a helical span at residues 75 to 95 (GLIQGVKGLLSFLSAPLIGAL). Over 96–103 (SDVWGRKS) the chain is Extracellular. The helical transmembrane segment at 104–124 (FLLLTVFFTCAPIPLMKISPW) threads the bilayer. Residues 125 to 126 (WY) lie on the Cytoplasmic side of the membrane. Residues 127–147 (FAVISVSGVFAVTFSVVFAYV) traverse the membrane as a helical segment. The Extracellular segment spans residues 148-160 (ADITQEHERSMAY). A helical membrane pass occupies residues 161–181 (GLVSATFAASLVTSPAIGAYL). At 182–188 (GRVYGDS) the chain is on the cytoplasmic side. Residues 189 to 209 (LVVVLATAIALLDICFILVAV) form a helical membrane-spanning segment. Topologically, residues 210 to 243 (PESLPEKMRPASWGAPISWEQADPFASLKKVGQD) are extracellular. The chain crosses the membrane as a helical span at residues 244 to 264 (SIVLLICITVFLSYLPEAGQY). Over 265–284 (SSFFLYLRQIMKFSPESVAA) the chain is Cytoplasmic. A helical membrane pass occupies residues 285 to 305 (FIAVLGILSIIAQTIVLSLLM). Residues 306–313 (RSIGNKNT) are Extracellular-facing. The chain crosses the membrane as a helical span at residues 314–334 (ILLGLGFQILQLAWYGFGSEP). Topologically, residues 335-337 (WMM) are cytoplasmic. The chain crosses the membrane as a helical span at residues 338–358 (WAAGAVAAMSSITFPAVSALV). The Extracellular portion of the chain corresponds to 359-379 (SRTADADQQGVVQGMITGIRG). Residues 380-400 (LCNGLGPALYGFIFYIFHVEL) form a helical membrane-spanning segment. Topologically, residues 401–427 (KELPITGTDLGTNTSPQHHFEQNSIIP) are cytoplasmic. Residues 428–448 (GPPFLFGACSVLLALLVALFI) form a helical membrane-spanning segment. The Extracellular segment spans residues 449-490 (PEHTNLSLRSSSWRKHCGSHSHPHNTQAPGEAKEPLLQDTNV). Residue Asn453 is glycosylated (N-linked (GlcNAc...) asparagine). Residues 465–490 (CGSHSHPHNTQAPGEAKEPLLQDTNV) form a disordered region.

The protein belongs to the major facilitator superfamily.

It is found in the membrane. This Homo sapiens (Human) protein is Hippocampus abundant transcript 1 protein.